Here is a 314-residue protein sequence, read N- to C-terminus: Olfactory receptor 5B17 (314 aa).

Residues 1-23 are Extracellular-facing; that stretch reads MENNTEVSEFILLGLTNAPELQV. Asparagine 3 carries N-linked (GlcNAc...) asparagine glycosylation. Residues 24-44 traverse the membrane as a helical segment; the sequence is PLFIMFTLIYLITLTGNLGMI. Over 45–52 the chain is Cytoplasmic; sequence ILILLDSH. Residues 53-73 traverse the membrane as a helical segment; that stretch reads LHTPMYFFLSNLSLAGIGYSS. The Extracellular portion of the chain corresponds to 74–97; sequence AVTPKVLTGLLIEDKAISYSACAA. Cysteine 95 and cysteine 187 are disulfide-bonded. The chain crosses the membrane as a helical span at residues 98-118; the sequence is QMFFCAVFATVENYLLSSMAY. Over 119-137 the chain is Cytoplasmic; that stretch reads DRYAAVCNPLHYTTTMTTR. The helical transmembrane segment at 138-158 threads the bilayer; the sequence is VCACLAIGCYVIGFLNASIQI. At 159-194 the chain is on the extracellular side; sequence GDTFRLSFCMSNVIHHFFCDKPAVITLTCSEKHISE. Residues 195 to 215 form a helical membrane-spanning segment; it reads LILVLISSFNVFFALLVTLIS. The Cytoplasmic segment spans residues 216 to 235; the sequence is YLFILITILKRHTGKGYQKP. Residues 236–256 form a helical membrane-spanning segment; sequence LSTCGSHLIAIFLFYITVIIM. At 257–269 the chain is on the extracellular side; that stretch reads YIRPSSSHSMDTD. A helical transmembrane segment spans residues 270 to 290; sequence KIASVFYTMIIPMLSPIVYTL. Residues 291 to 314 are Cytoplasmic-facing; the sequence is RNKDVKNAFMKVVEKAKYSLDSVF.

Belongs to the G-protein coupled receptor 1 family.

The protein localises to the cell membrane. Its function is as follows. Odorant receptor. This Homo sapiens (Human) protein is Olfactory receptor 5B17 (OR5B17).